Reading from the N-terminus, the 439-residue chain is Probable glycine dehydrogenase (decarboxylating) subunit 1 (439 aa).

Belongs to the GcvP family. N-terminal subunit subfamily. As to quaternary structure, the glycine cleavage system is composed of four proteins: P, T, L and H. In this organism, the P 'protein' is a heterodimer of two subunits.

It carries out the reaction N(6)-[(R)-lipoyl]-L-lysyl-[glycine-cleavage complex H protein] + glycine + H(+) = N(6)-[(R)-S(8)-aminomethyldihydrolipoyl]-L-lysyl-[glycine-cleavage complex H protein] + CO2. Its function is as follows. The glycine cleavage system catalyzes the degradation of glycine. The P protein binds the alpha-amino group of glycine through its pyridoxal phosphate cofactor; CO(2) is released and the remaining methylamine moiety is then transferred to the lipoamide cofactor of the H protein. The polypeptide is Probable glycine dehydrogenase (decarboxylating) subunit 1 (Aquifex aeolicus (strain VF5)).